A 238-amino-acid polypeptide reads, in one-letter code: 3-dehydroquinate dehydratase (238 aa).

3-dehydroquinate-binding positions include 35 to 37 (ELR) and arginine 70. Histidine 133 (proton donor/acceptor) is an active-site residue. Residue lysine 160 is the Schiff-base intermediate with substrate of the active site. 3-dehydroquinate contacts are provided by arginine 202 and glutamine 225.

The protein belongs to the type-I 3-dehydroquinase family. In terms of assembly, homodimer.

It carries out the reaction 3-dehydroquinate = 3-dehydroshikimate + H2O. The protein operates within metabolic intermediate biosynthesis; chorismate biosynthesis; chorismate from D-erythrose 4-phosphate and phosphoenolpyruvate: step 3/7. Its function is as follows. Involved in the third step of the chorismate pathway, which leads to the biosynthesis of aromatic amino acids. Catalyzes the cis-dehydration of 3-dehydroquinate (DHQ) and introduces the first double bond of the aromatic ring to yield 3-dehydroshikimate. In Staphylococcus aureus (strain Mu3 / ATCC 700698), this protein is 3-dehydroquinate dehydratase.